Reading from the N-terminus, the 109-residue chain is Hainantoxin-XVIII-3 (109 aa).

An N-terminal signal peptide occupies residues 1–18; that stretch reads MKLSIIIIATSLVIAVVA. A propeptide spanning residues 19–46 is cleaved from the precursor; sequence FPSKDSKAIENDKTEQRMEIVVQETARA. 4 disulfide bridges follow: C47–C62, C55–C68, C59–C108, and C61–C81.

It belongs to the neurotoxin 25 family. F7 subfamily. As to expression, expressed by the venom gland.

It is found in the secreted. Putative ion channel inhibitor. This is Hainantoxin-XVIII-3 from Cyriopagopus hainanus (Chinese bird spider).